We begin with the raw amino-acid sequence, 364 residues long: Geissoschizine synthase (364 aa).

Cysteine 51 serves as a coordination point for Zn(2+). Residue asparagine 52 participates in NADP(+) binding. 7 residues coordinate Zn(2+): histidine 73, glutamate 74, cysteine 104, cysteine 107, cysteine 110, cysteine 118, and cysteine 168. Residues leucine 194, glycine 196, leucine 197, serine 216, threonine 217, serine 218, lysine 221, arginine 261, valine 280, alanine 282, serine 304, threonine 306, and arginine 351 each coordinate NADP(+).

It belongs to the zinc-containing alcohol dehydrogenase family. Class-III subfamily. Homodimer. Zn(2+) is required as a cofactor. Expressed in leaf epidermis.

It carries out the reaction (19E)-geissoschizine + NADP(+) = 4,21-dehydrogeissoschizine + NADPH. The protein operates within alkaloid biosynthesis. Its function is as follows. Component of the seco-iridoid and derivatives monoterpenoid indole alkaloids (MIAs, e.g. catharanthine, tabersonine, vincadifformine, vindoline, vincristine, quinine and strychnine) biosynthesis pathway. During the conversion of strictosidine aglycone to geissoschizine, catalyzes iminium reduction on 4,21-dehydrogeissoschizine to produce 19E-geissoschizine, precursor of catharanthine and tabersonine derivatives. May also trigger the production of reactive intermediate used by the HL1, HL2, HL3 and HL4 to form catharanthine, vincadifformine and tabersonine. The polypeptide is Geissoschizine synthase (Catharanthus roseus (Madagascar periwinkle)).